The following is a 426-amino-acid chain: FK506-binding protein 3 (426 aa).

2 disordered regions span residues 37–143 (SLDP…PKHQ) and 171–314 (TGNY…KKKK). Acidic residues-rich tracts occupy residues 65 to 94 (DYFE…EAEE), 111 to 131 (EDEE…DDVS), and 181 to 225 (QDEE…SEEE). 3 stretches are compositionally biased toward basic and acidic residues: residues 226–257 (GTPK…ESTS), 264–278 (KKDE…KELE), and 287–311 (VEKD…DGDK). Residues 340-426 (GAKVGIRYIG…TFDIKLVSLK (87 aa)) enclose the PPIase FKBP-type domain.

This sequence belongs to the FKBP-type PPIase family. FKBP3/4 subfamily.

The protein resides in the nucleus. The protein localises to the nucleolus. It carries out the reaction [protein]-peptidylproline (omega=180) = [protein]-peptidylproline (omega=0). Inhibited by both FK506 and rapamycin. Functionally, PPIases accelerate the folding of proteins. It catalyzes the cis-trans isomerization of proline imidic peptide bonds in oligopeptides. This Candida albicans (strain SC5314 / ATCC MYA-2876) (Yeast) protein is FK506-binding protein 3 (FPR3).